The following is a 1385-amino-acid chain: DNA-directed RNA polymerase subunit beta' (1385 aa).

Zn(2+) contacts are provided by Cys-75, Cys-77, Cys-90, and Cys-93. Mg(2+)-binding residues include Asp-466, Asp-468, and Asp-470. Zn(2+) contacts are provided by Cys-809, Cys-883, Cys-890, and Cys-893.

The protein belongs to the RNA polymerase beta' chain family. In terms of assembly, the RNAP catalytic core consists of 2 alpha, 1 beta, 1 beta' and 1 omega subunit. When a sigma factor is associated with the core the holoenzyme is formed, which can initiate transcription. Mg(2+) serves as cofactor. Requires Zn(2+) as cofactor.

It carries out the reaction RNA(n) + a ribonucleoside 5'-triphosphate = RNA(n+1) + diphosphate. Its function is as follows. DNA-dependent RNA polymerase catalyzes the transcription of DNA into RNA using the four ribonucleoside triphosphates as substrates. This chain is DNA-directed RNA polymerase subunit beta', found in Nitratidesulfovibrio vulgaris (strain ATCC 29579 / DSM 644 / CCUG 34227 / NCIMB 8303 / VKM B-1760 / Hildenborough) (Desulfovibrio vulgaris).